A 254-amino-acid chain; its full sequence is Putative epimerase LsrE (254 aa).

A helical membrane pass occupies residues 14-34 (VALLASYPLSVGILAGQWIAL). A divalent metal cation contacts are provided by H50, D52, and H81. D52 serves as the catalytic Proton acceptor. Residues H81, 166 to 169 (GYGS), 199 to 201 (DGS), and 221 to 222 (GS) each bind substrate. D199 provides a ligand contact to a divalent metal cation. D199 acts as the Proton donor in catalysis.

Belongs to the ribulose-phosphate 3-epimerase family. A divalent metal cation is required as a cofactor.

Its subcellular location is the cell membrane. The protein is Putative epimerase LsrE (lsrE) of Salmonella typhi.